We begin with the raw amino-acid sequence, 114 residues long: Large ribosomal subunit protein bL19 (114 aa).

The protein belongs to the bacterial ribosomal protein bL19 family.

This protein is located at the 30S-50S ribosomal subunit interface and may play a role in the structure and function of the aminoacyl-tRNA binding site. The polypeptide is Large ribosomal subunit protein bL19 (Clostridium acetobutylicum (strain ATCC 824 / DSM 792 / JCM 1419 / IAM 19013 / LMG 5710 / NBRC 13948 / NRRL B-527 / VKM B-1787 / 2291 / W)).